The chain runs to 58 residues: Small ribosomal subunit protein bS21 (58 aa).

The tract at residues 37-58 (FYDKPSVKKRAKSKAAAKYRGR) is disordered. Basic residues predominate over residues 43 to 58 (VKKRAKSKAAAKYRGR).

Belongs to the bacterial ribosomal protein bS21 family.

In Chlamydia muridarum (strain MoPn / Nigg), this protein is Small ribosomal subunit protein bS21 (rpsU).